Consider the following 379-residue polypeptide: Cytochrome-c peroxidase IdrP1 (379 aa).

The N-terminal stretch at 1–24 (MNNRKPLQLSLLVASLAVAFTASA) is a signal peptide. 2 consecutive Cytochrome c domains span residues 50-158 (EKIA…DAFK) and 204-355 (TSQK…EALS). The heme c site is built by Cys-72, Cys-75, His-76, Cys-219, Cys-222, and His-223.

As to quaternary structure, the iodate reductase (Idr) complex is composed of a molybdopterin-dependent iodate reductase (IdrA and IdrB subunits) and two associated peroxidases (IdrP1 and IdrP2). Heme c serves as cofactor.

Its subcellular location is the periplasm. The catalysed reaction is 2 Fe(II)-[cytochrome c] + H2O2 + 2 H(+) = 2 Fe(III)-[cytochrome c] + 2 H2O. Functionally, involved in iodate respiration. Probably reduces the H(2)O(2) produced by IdrA/IdrB to H(2)O, using a reduced cytochrome c as the electron donor. The polypeptide is Cytochrome-c peroxidase IdrP1 (Pseudomonas sp. (strain SCT)).